The chain runs to 75 residues: Small ribosomal subunit protein bS18 (75 aa).

Belongs to the bacterial ribosomal protein bS18 family. Part of the 30S ribosomal subunit. Forms a tight heterodimer with protein bS6.

Functionally, binds as a heterodimer with protein bS6 to the central domain of the 16S rRNA, where it helps stabilize the platform of the 30S subunit. The polypeptide is Small ribosomal subunit protein bS18 (Buchnera aphidicola subsp. Acyrthosiphon pisum (strain 5A)).